Consider the following 402-residue polypeptide: Nuclear hormone receptor family member nhr-96 (402 aa).

Residues 4 to 79 (FGLCAVCGQV…VGMDVKKIQQ (76 aa)) constitute a DNA-binding region (nuclear receptor). NR C4-type zinc fingers lie at residues 7–27 (CAVCGQVTTGKNFGVISCRSC) and 44–67 (CVKASCAIFENGKFKCKKCRLKRC). Residues 154–402 (NYYNSLELLT…FSDPEMFELT (249 aa)) form the NR LBD domain.

This sequence belongs to the nuclear hormone receptor family.

Its subcellular location is the nucleus. In terms of biological role, orphan nuclear receptor. In Caenorhabditis elegans, this protein is Nuclear hormone receptor family member nhr-96 (nhr-96).